A 505-amino-acid polypeptide reads, in one-letter code: Ikaros family zinc finger protein (505 aa).

C2H2-type zinc fingers lie at residues 18-40 (LTCEICGMVCIGPNVLMVHKRSH), 46-68 (FQCNQCGASFTQKGNLLRHVKLH), 74-96 (FKCSLCSYACRRRDALMGHIRTH), and 102-128 (YKCNFCSRSYKQRSSLEEHQERCPGFH). Polar residues-rich tracts occupy residues 262–273 (FLNTPSPVTRSA) and 309–327 (RFQHDSPLSTSRSGLSQQP). Disordered stretches follow at residues 262–296 (FLNTPSPVTRSAGQALEATRRLESESPGLPSDIGS) and 309–440 (RFQH…VSGS). Gly residues predominate over residues 336–345 (ILGGSLGGIC). The segment covering 366–377 (ATSSPSNSCPDS) has biased composition (polar residues). Residues 393–406 (GSGSSTSRPNGSTG) show a composition bias toward low complexity. The segment covering 409-419 (HRPEMHQDNGR) has biased composition (basic and acidic residues). A compositionally biased stretch (polar residues) spans 424 to 439 (SGASDSSSLPTYNVSG). 2 C2H2-type zinc fingers span residues 448–470 (YPCHHCGLLFLDHVMYTLHMGCH) and 476–500 (FECNVCGYRSRDRYEFSSHIIRGEH).

Belongs to the Ikaros C2H2-type zinc-finger protein family. Heterodimer and homodimer with other IKAROS family members. As to expression, expression is strongest in the blood, gills and intestine.

It is found in the nucleus. The protein is Ikaros family zinc finger protein of Myxine glutinosa (Atlantic hagfish).